Reading from the N-terminus, the 309-residue chain is MPLPDTFSESVRIAVIGGTGISALEAEGFTAVASLDIQTPYGAPGSPLTILKTPQNTPIAFLSRHGLHHELTPTEIPNRANIAALRSIGVRSIIAFSAVGSLQEHIRPRDFVVPSQIIDRTKGLRASTFFEGGLVGHVGFADPFDSELSKVVFDIGSDGVLNGEGVKMHKDALLICMEGPQFSTRAESNLYRSWGGDVINMSALPEAKLAKEAEIAYVMVCMSTDYDCWKTNEAAVTVETVMGNMHANGANAKHLAAAILKELAKEEHQDLVGAKHLEGLSKWACCTAPAGRKAEVVKKIEFMLPGYFS.

Phosphate is bound by residues threonine 19, 64 to 65 (RH), and 97 to 98 (SA). Methionine 201 is a binding site for substrate. Residue serine 202 participates in phosphate binding. 225-227 (DYD) contributes to the substrate binding site.

This sequence belongs to the PNP/MTAP phosphorylase family. MTAP subfamily. Homotrimer.

The protein localises to the cytoplasm. It localises to the nucleus. The catalysed reaction is S-methyl-5'-thioadenosine + phosphate = 5-(methylsulfanyl)-alpha-D-ribose 1-phosphate + adenine. The protein operates within amino-acid biosynthesis; L-methionine biosynthesis via salvage pathway; S-methyl-5-thio-alpha-D-ribose 1-phosphate from S-methyl-5'-thioadenosine (phosphorylase route): step 1/1. Its function is as follows. Catalyzes the reversible phosphorylation of S-methyl-5'-thioadenosine (MTA) to adenine and 5-methylthioribose-1-phosphate. Involved in the breakdown of MTA, a major by-product of polyamine biosynthesis. Responsible for the first step in the methionine salvage pathway after MTA has been generated from S-adenosylmethionine. Has broad substrate specificity with 6-aminopurine nucleosides as preferred substrates. This Tuber melanosporum (strain Mel28) (Perigord black truffle) protein is S-methyl-5'-thioadenosine phosphorylase.